The primary structure comprises 338 residues: Holliday junction branch migration complex subunit RuvB (338 aa).

The tract at residues 1–181 (MERAITPEKR…FGVISRLEFY (181 aa)) is large ATPase domain (RuvB-L). Residues Leu20, Arg21, Gly62, Lys65, Thr66, Thr67, 128–130 (EDF), Arg171, Tyr181, and Arg218 each bind ATP. Thr66 lines the Mg(2+) pocket. Residues 182-252 (THDELAFIVT…VVQETLRLLE (71 aa)) are small ATPAse domain (RuvB-S). Positions 255 to 338 (EMGFDQMDRM…TPERPQGSLF (84 aa)) are head domain (RuvB-H). Residues Arg310 and Arg315 each contribute to the DNA site.

This sequence belongs to the RuvB family. In terms of assembly, homohexamer. Forms an RuvA(8)-RuvB(12)-Holliday junction (HJ) complex. HJ DNA is sandwiched between 2 RuvA tetramers; dsDNA enters through RuvA and exits via RuvB. An RuvB hexamer assembles on each DNA strand where it exits the tetramer. Each RuvB hexamer is contacted by two RuvA subunits (via domain III) on 2 adjacent RuvB subunits; this complex drives branch migration. In the full resolvosome a probable DNA-RuvA(4)-RuvB(12)-RuvC(2) complex forms which resolves the HJ.

It localises to the cytoplasm. It carries out the reaction ATP + H2O = ADP + phosphate + H(+). Its function is as follows. The RuvA-RuvB-RuvC complex processes Holliday junction (HJ) DNA during genetic recombination and DNA repair, while the RuvA-RuvB complex plays an important role in the rescue of blocked DNA replication forks via replication fork reversal (RFR). RuvA specifically binds to HJ cruciform DNA, conferring on it an open structure. The RuvB hexamer acts as an ATP-dependent pump, pulling dsDNA into and through the RuvAB complex. RuvB forms 2 homohexamers on either side of HJ DNA bound by 1 or 2 RuvA tetramers; 4 subunits per hexamer contact DNA at a time. Coordinated motions by a converter formed by DNA-disengaged RuvB subunits stimulates ATP hydrolysis and nucleotide exchange. Immobilization of the converter enables RuvB to convert the ATP-contained energy into a lever motion, pulling 2 nucleotides of DNA out of the RuvA tetramer per ATP hydrolyzed, thus driving DNA branch migration. The RuvB motors rotate together with the DNA substrate, which together with the progressing nucleotide cycle form the mechanistic basis for DNA recombination by continuous HJ branch migration. Branch migration allows RuvC to scan DNA until it finds its consensus sequence, where it cleaves and resolves cruciform DNA. The protein is Holliday junction branch migration complex subunit RuvB of Trichlorobacter lovleyi (strain ATCC BAA-1151 / DSM 17278 / SZ) (Geobacter lovleyi).